A 376-amino-acid chain; its full sequence is MHCAQYAAGRCRSCQWLDKPYPQQLADKQHHLESLLAGHAVTQWLALVFGRESAFRNKAKMVVSGSVERPLLGMLHRDGTPVDLCACPLYPPSFEPVFTVLKTFIARAGLTPYNVARKRGELKFLLLTESTYNGELMLRFVLRSETKLAQLTAALPWLQQQLPQLAVISANIQPVHMAILEGEREIPLTEQQALPERFNQVPLYIRPQSFFQTNPPVAASLYATARQWVQEHEVHSMWDLFCGVGGFGLHCAGPETQLTGIEISAEAIACARQSAEQLGLKNVSFAALDSTRFATAEAQIPELVLVNPPRRGIGRELCDYLSQMAPKFILYSSCNAETMAKDISLLAGYHIERVQLFDMFPHTSHYEVLTLLALRR.

Cys3, Cys11, Cys14, and Cys87 together coordinate [4Fe-4S] cluster. Residues Gln212, Phe241, Glu262, and Asn307 each coordinate S-adenosyl-L-methionine. Residue Cys334 is the Nucleophile of the active site.

This sequence belongs to the class I-like SAM-binding methyltransferase superfamily. RNA M5U methyltransferase family. RlmC subfamily.

It catalyses the reaction uridine(747) in 23S rRNA + S-adenosyl-L-methionine = 5-methyluridine(747) in 23S rRNA + S-adenosyl-L-homocysteine + H(+). Catalyzes the formation of 5-methyl-uridine at position 747 (m5U747) in 23S rRNA. This chain is 23S rRNA (uracil(747)-C(5))-methyltransferase RlmC, found in Yersinia pseudotuberculosis serotype O:1b (strain IP 31758).